Here is a 628-residue protein sequence, read N- to C-terminus: MSDWSLDQARKTYSIPHWADGYFDVNAAGHVVVTPTADGPAVSLPEVVDAARAAGAKLPLLVRFPDILGQRLGKLQAAFAQAQSEWDYAGGYTAVYPIKVNQHRGVAGTLASHHGEGFGLEAGSKPELMAVLALSRPGGLIVCNGYKDREYIRLALIGRKLGLQTFIVIEKPSELTLVLEEARALDVKPGLGVRMRLASLGAGKWQNSGGDKAKFGLSPRQVLDLWKTLRDTEYADSLNLLHFHMGSQISNVRDIANGMREATRYFVELSRLGAKISHVDVGGGLGIDYEGTRSRSYCSINYGLHSYASNIVQPLASACEEHGLTPPRIVTECGRAMTAHHAVLIANVSEVEQAPEGRVPDAHDDEPAAIRHLREIHDELDVRPAVELFQEAQHFHAEGLSAYALGQIDLTHRARIDDLFYAIAHGVRARLSFDEKSHRPVLDELNERLVDKYFVNFSVFESIPDVWAIDQVFPIVPIERLNEAPQRRGIIADMTCDSDGMVKTYVENESLDSSLPLHRLNAGESYRIGFFLVGAYQEILGDIHNLFGDTDAVEVVVDRDGYRIAQQRRGDTTDVMLDYVGYQLDTLRATYAERIAAAHLSPERAQELSAALEAGLTGYTYLSDEPLG.

Lys99 is subject to N6-(pyridoxal phosphate)lysine. Residue 279–289 coordinates substrate; it reads VDVGGGLGIDY.

It belongs to the Orn/Lys/Arg decarboxylase class-II family. SpeA subfamily. Mg(2+) serves as cofactor. The cofactor is pyridoxal 5'-phosphate.

It catalyses the reaction L-arginine + H(+) = agmatine + CO2. Its function is as follows. Catalyzes the biosynthesis of agmatine from arginine. This Xanthomonas axonopodis pv. citri (strain 306) protein is Biosynthetic arginine decarboxylase.